A 702-amino-acid chain; its full sequence is Elongation factor G (702 aa).

The 279-residue stretch at 8 to 286 (DKVRNIGIIA…AVVEYLPSPL (279 aa)) folds into the tr-type G domain. GTP contacts are provided by residues 17–24 (AHIDAGKT), 85–89 (DTPGH), and 139–142 (NKMD).

The protein belongs to the TRAFAC class translation factor GTPase superfamily. Classic translation factor GTPase family. EF-G/EF-2 subfamily.

The protein resides in the cytoplasm. Functionally, catalyzes the GTP-dependent ribosomal translocation step during translation elongation. During this step, the ribosome changes from the pre-translocational (PRE) to the post-translocational (POST) state as the newly formed A-site-bound peptidyl-tRNA and P-site-bound deacylated tRNA move to the P and E sites, respectively. Catalyzes the coordinated movement of the two tRNA molecules, the mRNA and conformational changes in the ribosome. The protein is Elongation factor G of Chloroflexus aggregans (strain MD-66 / DSM 9485).